A 229-amino-acid chain; its full sequence is UPF0173 metal-dependent hydrolase SAOUHSC_01815 (229 aa).

The protein belongs to the UPF0173 family.

This Staphylococcus aureus (strain NCTC 8325 / PS 47) protein is UPF0173 metal-dependent hydrolase SAOUHSC_01815.